Reading from the N-terminus, the 165-residue chain is Thiol peroxidase (165 aa).

Residues 18 to 165 form the Thioredoxin domain; sequence PAVGSPAPAF…YEAALAALGA (148 aa). The active-site Cysteine sulfenic acid (-SOH) intermediate is Cys60. Cys60 and Cys93 form a disulfide bridge.

Belongs to the peroxiredoxin family. Tpx subfamily. Homodimer.

It catalyses the reaction a hydroperoxide + [thioredoxin]-dithiol = an alcohol + [thioredoxin]-disulfide + H2O. Thiol-specific peroxidase that catalyzes the reduction of hydrogen peroxide and organic hydroperoxides to water and alcohols, respectively. Plays a role in cell protection against oxidative stress by detoxifying peroxides. This is Thiol peroxidase from Mycobacterium bovis (strain ATCC BAA-935 / AF2122/97).